Consider the following 496-residue polypeptide: NADH-quinone oxidoreductase subunit N (496 aa).

The next 14 membrane-spanning stretches (helical) occupy residues 8 to 28 (LLST…VGLI), 37 to 57 (MFPL…YDFF), 73 to 93 (QFAG…VLST), 110 to 130 (LLLL…LLTM), 131 to 151 (YVGL…HPND), 162 to 182 (LVLG…IYGL), 203 to 223 (TILA…LVPF), 235 to 255 (PAPI…AALV), 271 to 291 (GLIL…LMAF), 300 to 320 (MAYS…AVSI), 341 to 361 (GVLF…AVIT), 386 to 406 (AAVL…AGFV), 421 to 441 (VWIA…YLSI), and 464 to 484 (FGMI…TPLA).

It belongs to the complex I subunit 2 family. NDH-1 is composed of 14 different subunits. Subunits NuoA, H, J, K, L, M, N constitute the membrane sector of the complex.

The protein resides in the cell membrane. The enzyme catalyses a quinone + NADH + 5 H(+)(in) = a quinol + NAD(+) + 4 H(+)(out). Functionally, NDH-1 shuttles electrons from NADH, via FMN and iron-sulfur (Fe-S) centers, to quinones in the respiratory chain. The immediate electron acceptor for the enzyme in this species is believed to be a menaquinone. Couples the redox reaction to proton translocation (for every two electrons transferred, four hydrogen ions are translocated across the cytoplasmic membrane), and thus conserves the redox energy in a proton gradient. This Desulfitobacterium hafniense (strain DSM 10664 / DCB-2) protein is NADH-quinone oxidoreductase subunit N.